Reading from the N-terminus, the 381-residue chain is Actin-binding Rho-activating protein (381 aa).

Disordered stretches follow at residues 39–156 and 179–207; these read ENSI…SHGS and QEEP…PEQD. A compositionally biased stretch (polar residues) spans 69 to 79; that stretch reads PTSHQKAQSAP. Residues 97 to 110 are compositionally biased toward basic and acidic residues; that stretch reads KAPEVSHIKKKEVS. 2 positions are modified to phosphoserine: S156 and S188. Over residues 179 to 188 the composition is skewed to basic and acidic residues; it reads QEEPTWRSDS. Actin-binding regions lie at residues 199 to 299 and 300 to 381; these read EAEE…AERA and KRAE…TLLK. Interaction with actin stretches follow at residues 240 to 285 and 352 to 381; these read SPVG…GDEG and MRAR…TLLK.

In terms of assembly, binds F-actin and ABLIM1, ABLIM2 and ABLIM3. Interaction with ABLIM2 and ABLIM3 enhances activity.

The protein localises to the cytoplasm. It localises to the myofibril. The protein resides in the sarcomere. It is found in the cytoskeleton. Its function is as follows. Acts as an activator of serum response factor (SRF)-dependent transcription possibly by inducing nuclear translocation of MKL1 or MKL2 and through a mechanism requiring Rho-actin signaling. The polypeptide is Actin-binding Rho-activating protein (Homo sapiens (Human)).